The following is a 469-amino-acid chain: Mitochondrial distribution and morphology protein 10 (469 aa).

This sequence belongs to the MDM10 family. Component of the ER-mitochondria encounter structure (ERMES) or MDM complex, composed of MMM1, MDM10, MDM12 and MDM34. Associates with the mitochondrial outer membrane sorting assembly machinery SAM(core) complex.

The protein localises to the mitochondrion outer membrane. Component of the ERMES/MDM complex, which serves as a molecular tether to connect the endoplasmic reticulum and mitochondria. Components of this complex are involved in the control of mitochondrial shape and protein biogenesis and may function in phospholipid exchange. MDM10 is involved in the late assembly steps of the general translocase of the mitochondrial outer membrane (TOM complex). Functions in the TOM40-specific route of the assembly of outer membrane beta-barrel proteins, including the association of TOM40 with the receptor TOM22 and small TOM proteins. Can associate with the SAM(core) complex as well as the MDM12-MMM1 complex, both involved in late steps of the major beta-barrel assembly pathway, that is responsible for biogenesis of all outer membrane beta-barrel proteins. May act as a switch that shuttles between both complexes and channels precursor proteins into the TOM40-specific pathway. Plays a role in mitochondrial morphology and in the inheritance of mitochondria. This chain is Mitochondrial distribution and morphology protein 10, found in Scheffersomyces stipitis (strain ATCC 58785 / CBS 6054 / NBRC 10063 / NRRL Y-11545) (Yeast).